A 239-amino-acid chain; its full sequence is Ribosomal RNA small subunit methyltransferase G (239 aa).

S-adenosyl-L-methionine is bound by residues Gly79, Phe84, 130 to 131, and Arg149; that span reads AE. Basic residues predominate over residues 218 to 227; the sequence is KHKKTPKKYP. The segment at 218–239 is disordered; the sequence is KHKKTPKKYPRQAGTPNKKPIA.

This sequence belongs to the methyltransferase superfamily. RNA methyltransferase RsmG family.

It is found in the cytoplasm. In terms of biological role, specifically methylates the N7 position of a guanine in 16S rRNA. This is Ribosomal RNA small subunit methyltransferase G from Leuconostoc citreum (strain KM20).